A 582-amino-acid chain; its full sequence is Protein NUCLEAR FUSION DEFECTIVE 4 (582 aa).

The interval 1–20 is disordered; sequence MRPRIRDVSDKLRPNRASFD. Transmembrane regions (helical) follow at residues 46-66, 100-120, 132-152, 172-192, 202-222, 243-263, 270-290, and 358-378; these read VLVA…FSAY, IALG…MGFV, IITL…LSIC, LALS…SLAF, LYLL…LYPV, VFTI…LSSS, LNFI…LLVY, and LEFW…LVYS. The N-linked (GlcNAc...) asparagine glycan is linked to Asn391. Transmembrane regions (helical) follow at residues 395-412, 425-445, 458-478, 489-509, and 536-556; these read LVTI…LSAA, TGWF…LAVS, LIGL…SDLF, ILIT…ASIY, and TFVF…SLYI.

The protein localises to the membrane. Required for karyogamy during female gametophyte development, when the two polar nuclei fuse to form the diploid central cell nucleus. The polypeptide is Protein NUCLEAR FUSION DEFECTIVE 4 (Arabidopsis thaliana (Mouse-ear cress)).